We begin with the raw amino-acid sequence, 361 residues long: Chorismate synthase (361 aa).

NADP(+) is bound by residues Arg-48 and Arg-54. Residues 125 to 127 (RSS), 238 to 239 (NA), Gly-278, 293 to 297 (KPTSS), and Arg-319 contribute to the FMN site.

This sequence belongs to the chorismate synthase family. As to quaternary structure, homotetramer. The cofactor is FMNH2.

It catalyses the reaction 5-O-(1-carboxyvinyl)-3-phosphoshikimate = chorismate + phosphate. It participates in metabolic intermediate biosynthesis; chorismate biosynthesis; chorismate from D-erythrose 4-phosphate and phosphoenolpyruvate: step 7/7. Its function is as follows. Catalyzes the anti-1,4-elimination of the C-3 phosphate and the C-6 proR hydrogen from 5-enolpyruvylshikimate-3-phosphate (EPSP) to yield chorismate, which is the branch point compound that serves as the starting substrate for the three terminal pathways of aromatic amino acid biosynthesis. This reaction introduces a second double bond into the aromatic ring system. This is Chorismate synthase from Klebsiella pneumoniae subsp. pneumoniae (strain ATCC 700721 / MGH 78578).